A 640-amino-acid polypeptide reads, in one-letter code: Probable potassium transport system protein Kup 2 (640 aa).

The tract at residues 1–20 (MTADIAATPAETPATNGHGD) is disordered. 12 consecutive transmembrane segments (helical) span residues 30-50 (LTLG…LYAL), 71-91 (VVSL…VVIL), 117-137 (ASII…DAVI), 155-175 (AAFD…LFAV), 183-203 (VAAF…IAAF), 224-244 (FMLH…LAVT), 265-285 (WLFV…ALVI), 294-314 (PFFL…ATVA), 363-383 (LLLV…ALAS), 385-405 (YGIS…VVIW), 410-430 (WSPI…LTFL), and 437-457 (VLEG…LMYT).

Belongs to the HAK/KUP transporter (TC 2.A.72) family.

It localises to the cell inner membrane. The catalysed reaction is K(+)(in) + H(+)(in) = K(+)(out) + H(+)(out). Transport of potassium into the cell. Likely operates as a K(+):H(+) symporter. The protein is Probable potassium transport system protein Kup 2 of Bradyrhizobium sp. (strain ORS 278).